The following is a 428-amino-acid chain: Chaperone SurA (428 aa).

The first 19 residues, 1–19, serve as a signal peptide directing secretion; the sequence is MNIWKTLLLGMLVTGSAVS. 2 PpiC domains span residues 170–268 and 277–377; these read SVEY…KIED and VTEV…EVLD.

It localises to the periplasm. It catalyses the reaction [protein]-peptidylproline (omega=180) = [protein]-peptidylproline (omega=0). In terms of biological role, chaperone involved in the correct folding and assembly of outer membrane proteins. Recognizes specific patterns of aromatic residues and the orientation of their side chains, which are found more frequently in integral outer membrane proteins. May act in both early periplasmic and late outer membrane-associated steps of protein maturation. This chain is Chaperone SurA, found in Vibrio vulnificus (strain YJ016).